The sequence spans 445 residues: Phosphoglucosamine mutase (445 aa).

The Phosphoserine intermediate role is filled by Ser-102. Positions 102, 241, 243, and 245 each coordinate Mg(2+). Ser-102 bears the Phosphoserine mark.

The protein belongs to the phosphohexose mutase family. It depends on Mg(2+) as a cofactor. Post-translationally, activated by phosphorylation.

The enzyme catalyses alpha-D-glucosamine 1-phosphate = D-glucosamine 6-phosphate. Catalyzes the conversion of glucosamine-6-phosphate to glucosamine-1-phosphate. The polypeptide is Phosphoglucosamine mutase (Shewanella sp. (strain ANA-3)).